A 227-amino-acid chain; its full sequence is Ribose-5-phosphate isomerase A (227 aa).

Residues 28 to 31 (TGST), 85 to 88 (DGAD), and 98 to 101 (KGGG) contribute to the substrate site. The Proton acceptor role is filled by glutamate 107. Lysine 125 contacts substrate.

This sequence belongs to the ribose 5-phosphate isomerase family. In terms of assembly, homodimer.

The catalysed reaction is aldehydo-D-ribose 5-phosphate = D-ribulose 5-phosphate. It functions in the pathway carbohydrate degradation; pentose phosphate pathway; D-ribose 5-phosphate from D-ribulose 5-phosphate (non-oxidative stage): step 1/1. Its function is as follows. Catalyzes the reversible conversion of ribose-5-phosphate to ribulose 5-phosphate. This chain is Ribose-5-phosphate isomerase A, found in Limosilactobacillus reuteri (strain DSM 20016) (Lactobacillus reuteri).